Consider the following 434-residue polypeptide: 3-phosphoshikimate 1-carboxyvinyltransferase (434 aa).

The 3-phosphoshikimate site is built by Lys22, Ser23, and Arg27. A phosphoenolpyruvate-binding site is contributed by Lys22. Phosphoenolpyruvate contacts are provided by Gly93 and Arg121. Residues Ser168, Ser169, Gln170, Ser199, Asp320, and Lys347 each contribute to the 3-phosphoshikimate site. Gln170 serves as a coordination point for phosphoenolpyruvate. Catalysis depends on Asp320, which acts as the Proton acceptor. Residues Arg351, Arg394, and Lys419 each contribute to the phosphoenolpyruvate site.

The protein belongs to the EPSP synthase family. As to quaternary structure, monomer.

It localises to the cytoplasm. The catalysed reaction is 3-phosphoshikimate + phosphoenolpyruvate = 5-O-(1-carboxyvinyl)-3-phosphoshikimate + phosphate. It functions in the pathway metabolic intermediate biosynthesis; chorismate biosynthesis; chorismate from D-erythrose 4-phosphate and phosphoenolpyruvate: step 6/7. Functionally, catalyzes the transfer of the enolpyruvyl moiety of phosphoenolpyruvate (PEP) to the 5-hydroxyl of shikimate-3-phosphate (S3P) to produce enolpyruvyl shikimate-3-phosphate and inorganic phosphate. This Burkholderia cenocepacia (strain HI2424) protein is 3-phosphoshikimate 1-carboxyvinyltransferase.